We begin with the raw amino-acid sequence, 361 residues long: Alanine racemase 2 (361 aa).

The active-site Proton acceptor; specific for D-alanine is the lysine 30. At lysine 30 the chain carries N6-(pyridoxal phosphate)lysine. Arginine 122 contacts substrate. Catalysis depends on tyrosine 256, which acts as the Proton acceptor; specific for L-alanine. Position 303 (methionine 303) interacts with substrate.

This sequence belongs to the alanine racemase family. Pyridoxal 5'-phosphate serves as cofactor.

It catalyses the reaction L-alanine = D-alanine. It participates in amino-acid biosynthesis; D-alanine biosynthesis; D-alanine from L-alanine: step 1/1. Functionally, catalyzes the interconversion of L-alanine and D-alanine. May also act on other amino acids. The sequence is that of Alanine racemase 2 (alr2) from Staphylococcus aureus (strain Mu50 / ATCC 700699).